We begin with the raw amino-acid sequence, 139 residues long: uncharacterized protein (139 aa).

Residues 19 to 73 enclose the HTH cro/C1-type domain; it reads IRLRRTMLGMSQEKLGESLGITFQQIQKYEKGTNRVGASRLQNISQILNVPVSFF. Residues 30-49 constitute a DNA-binding region (H-T-H motif); it reads QEKLGESLGITFQQIQKYEK.

This is an uncharacterized protein from Rhizobium meliloti (strain 1021) (Ensifer meliloti).